Reading from the N-terminus, the 226-residue chain is Late protein I226R (226 aa).

An N-terminal signal peptide occupies residues 1–16 (MKMETFLVCLFHNAKG). An N-linked (GlcNAc...) asparagine; by host glycan is attached at Asn164.

It belongs to the asfivirus I226R family.

Plays a role in the inhibition of host NF-kappa-B and IRF3 signaling pathways. Mechanistically, promotes the degradation of host IKBKG through enhancing its ubiquitination leading to inhibition of both pathways. This Ornithodoros (relapsing fever ticks) protein is Late protein I226R.